The primary structure comprises 837 residues: Semaphorin-4G (837 aa).

An N-terminal signal peptide occupies residues 1–17 (MWGRLWPLLFSFLTVTA). Over 18–673 (VPGPSLRRPS…GAQLAHDMRM (656 aa)) the chain is Extracellular. The region spanning 35 to 503 (RLTISYEELS…AASGVLQFPL (469 aa)) is the Sema domain. N-linked (GlcNAc...) asparagine glycans are attached at residues Asn55, Asn111, and Asn126. Cys104 and Cys115 are disulfide-bonded. 3 disulfides stabilise this stretch: Cys133-Cys142, Cys268-Cys375, and Cys292-Cys335. Asn386 carries N-linked (GlcNAc...) asparagine glycosylation. The 52-residue stretch at 505–556 (SCSRYQSCYDCILARDPYCGWDSSIHACMVATTVANRTELIQDIERGNRGCE) folds into the PSI domain. Intrachain disulfides connect Cys506-Cys523 and Cys515-Cys532. Residues Asn540 and Asn596 are each glycosylated (N-linked (GlcNAc...) asparagine). In terms of domain architecture, Ig-like C2-type spans 565 to 647 (PPLKTRSVLR…RMLLASYSLT (83 aa)). The cysteines at positions 582 and 630 are disulfide-linked. The helical transmembrane segment at 674–694 (FYVVAIAILGGLCLILASSLL) threads the bilayer. Residues 695-837 (YVACLKGGRR…LVEQLDESSV (143 aa)) are Cytoplasmic-facing. Positions 721–776 (SAVQLQTVSGQCPGEEDEGDDGEGTGGLESGCLQIIPGEGAPAPPPPPPPPPPAEL) are disordered. Positions 734–743 (GEEDEGDDGE) are enriched in acidic residues. Residues 762–774 (PAPPPPPPPPPPA) are compositionally biased toward pro residues. Phosphoserine occurs at positions 794 and 836.

The protein belongs to the semaphorin family. As to quaternary structure, interacts with PLXNB2. As to expression, brain, spinal cord, and several sensory organs as well as specific populations of projection neurons.

The protein resides in the cell membrane. Functionally, cell surface receptor for PLXNB2. May play a role in axon guidance. The chain is Semaphorin-4G (Sema4g) from Mus musculus (Mouse).